The primary structure comprises 646 residues: Mitochondrial distribution and morphology protein 10 (646 aa).

Disordered stretches follow at residues 206-230 (KSTSSSMDRLDSSNPSLSSSTSLSN) and 315-347 (ETSSSASYPQRNGSVLHTGSSSSSEDTEAGGGL). Over residues 207–230 (STSSSMDRLDSSNPSLSSSTSLSN) the composition is skewed to low complexity. Residues 315–333 (ETSSSASYPQRNGSVLHTG) show a composition bias toward polar residues.

The protein belongs to the MDM10 family. As to quaternary structure, component of the ER-mitochondria encounter structure (ERMES) or MDM complex, composed of MMM1, MDM10, MDM12 and MDM34. Associates with the mitochondrial outer membrane sorting assembly machinery SAM(core) complex.

Its subcellular location is the mitochondrion outer membrane. Its function is as follows. Component of the ERMES/MDM complex, which serves as a molecular tether to connect the endoplasmic reticulum and mitochondria. Components of this complex are involved in the control of mitochondrial shape and protein biogenesis and may function in phospholipid exchange. MDM10 is involved in the late assembly steps of the general translocase of the mitochondrial outer membrane (TOM complex). Functions in the TOM40-specific route of the assembly of outer membrane beta-barrel proteins, including the association of TOM40 with the receptor TOM22 and small TOM proteins. Can associate with the SAM(core) complex as well as the MDM12-MMM1 complex, both involved in late steps of the major beta-barrel assembly pathway, that is responsible for biogenesis of all outer membrane beta-barrel proteins. May act as a switch that shuttles between both complexes and channels precursor proteins into the TOM40-specific pathway. Plays a role in mitochondrial morphology and in the inheritance of mitochondria. The polypeptide is Mitochondrial distribution and morphology protein 10 (Mycosarcoma maydis (Corn smut fungus)).